Reading from the N-terminus, the 149-residue chain is Large ribosomal subunit protein bL9 (149 aa).

It belongs to the bacterial ribosomal protein bL9 family.

Its function is as follows. Binds to the 23S rRNA. The polypeptide is Large ribosomal subunit protein bL9 (Endomicrobium trichonymphae).